The following is a 65-amino-acid chain: Large ribosomal subunit protein uL29 (65 aa).

The protein belongs to the universal ribosomal protein uL29 family.

The chain is Large ribosomal subunit protein uL29 from Acinetobacter baylyi (strain ATCC 33305 / BD413 / ADP1).